The chain runs to 650 residues: Probable potassium transport system protein Kup 1 (650 aa).

Helical transmembrane passes span 12–32 (GLLIAIGIVYGDIGTSPLYVM), 54–74 (ISLVLWTVTLLTTLQTVIIAL), 97–117 (WLVLPALIGGAAILADGTLTP), 139–159 (VSSQSMVIAITVLILLVLFSI), 170–190 (AFGPIMFVWFTFLGVIGLINM), 216–236 (AGIFILGSIFLATTGAEALYS), 249–269 (SWPFVFVCLSLNYFGQGVWIL), 295–315 (LAAIILATIAAVIASQALITG), 344–364 (IYIPSINKGICVATIAIVLYF), 375–395 (GLSITISMLMTTILLYEWLAM), 400–420 (PVWNWIFLIFFGVLDIMFMIS), and 428–448 (GGYVSLFIAGAIGFIMYVWYY).

The protein belongs to the HAK/KUP transporter (TC 2.A.72) family.

The protein localises to the cell membrane. It catalyses the reaction K(+)(in) + H(+)(in) = K(+)(out) + H(+)(out). In terms of biological role, transport of potassium into the cell. Likely operates as a K(+):H(+) symporter. In Lactobacillus acidophilus (strain ATCC 700396 / NCK56 / N2 / NCFM), this protein is Probable potassium transport system protein Kup 1.